Here is a 372-residue protein sequence, read N- to C-terminus: NAD(P)H-quinone oxidoreductase subunit 1 (372 aa).

Helical transmembrane passes span 31 to 51, 65 to 85, 97 to 117, 128 to 148, 176 to 196, 254 to 276, 304 to 324, and 347 to 367; these read PLPM…VVWL, PEFI…KLVL, LLFT…YLIL, VGLG…GLLM, LALS…VDIV, FALF…AVLY, LIFA…LIFL, and FLLP…LAFP.

This sequence belongs to the complex I subunit 1 family. As to quaternary structure, NDH-1 is composed of at least 11 different subunits.

It is found in the cellular thylakoid membrane. The catalysed reaction is a plastoquinone + NADH + (n+1) H(+)(in) = a plastoquinol + NAD(+) + n H(+)(out). The enzyme catalyses a plastoquinone + NADPH + (n+1) H(+)(in) = a plastoquinol + NADP(+) + n H(+)(out). NDH-1 shuttles electrons from an unknown electron donor, via FMN and iron-sulfur (Fe-S) centers, to quinones in the respiratory and/or the photosynthetic chain. The immediate electron acceptor for the enzyme in this species is believed to be plastoquinone. Couples the redox reaction to proton translocation, and thus conserves the redox energy in a proton gradient. The sequence is that of NAD(P)H-quinone oxidoreductase subunit 1 from Leptolyngbya boryana (Plectonema boryanum).